A 299-amino-acid chain; its full sequence is Oxygen-dependent coproporphyrinogen-III oxidase (299 aa).

Serine 92 provides a ligand contact to substrate. 2 residues coordinate a divalent metal cation: histidine 96 and histidine 106. Histidine 106 (proton donor) is an active-site residue. Position 108–110 (asparagine 108–arginine 110) interacts with substrate. Positions 145 and 175 each coordinate a divalent metal cation. The tract at residues tyrosine 240 to glutamate 275 is important for dimerization. Position 258-260 (glycine 258–arginine 260) interacts with substrate.

It belongs to the aerobic coproporphyrinogen-III oxidase family. In terms of assembly, homodimer. Requires a divalent metal cation as cofactor.

It is found in the cytoplasm. The enzyme catalyses coproporphyrinogen III + O2 + 2 H(+) = protoporphyrinogen IX + 2 CO2 + 2 H2O. The protein operates within porphyrin-containing compound metabolism; protoporphyrin-IX biosynthesis; protoporphyrinogen-IX from coproporphyrinogen-III (O2 route): step 1/1. Functionally, involved in the heme biosynthesis. Catalyzes the aerobic oxidative decarboxylation of propionate groups of rings A and B of coproporphyrinogen-III to yield the vinyl groups in protoporphyrinogen-IX. This Citrobacter koseri (strain ATCC BAA-895 / CDC 4225-83 / SGSC4696) protein is Oxygen-dependent coproporphyrinogen-III oxidase.